The primary structure comprises 68 residues: Guanine nucleotide-binding protein G(I)/G(S)/G(O) subunit gamma-10 (68 aa).

N-acetylserine is present on S2. C65 carries the post-translational modification Cysteine methyl ester. A lipid anchor (S-geranylgeranyl cysteine) is attached at C65. Positions 66–68 (ALL) are cleaved as a propeptide — removed in mature form.

Belongs to the G protein gamma family. G proteins are composed of 3 units, alpha, beta and gamma. Abundantly and ubiquitously expressed.

The protein resides in the cell membrane. In terms of biological role, guanine nucleotide-binding proteins (G proteins) are involved as a modulator or transducer in various transmembrane signaling systems. The beta and gamma chains are required for the GTPase activity, for replacement of GDP by GTP, and for G protein-effector interaction. Interacts with beta-1 and beta-2, but not with beta-3. This chain is Guanine nucleotide-binding protein G(I)/G(S)/G(O) subunit gamma-10 (GNG10), found in Homo sapiens (Human).